Consider the following 473-residue polypeptide: Photosystem II CP43 reaction center protein (473 aa).

Residues 1–14 constitute a propeptide that is removed on maturation; that stretch reads MKTLYSLRRFYPVE. Residue T15 is modified to N-acetylthreonine. T15 carries the post-translational modification Phosphothreonine. Transmembrane regions (helical) follow at residues 69–93, 134–155, 178–200, 255–275, and 291–312; these read LFEV…PHLA, LLGP…KDRN, KALY…RKIT, KPFA…LSYS, and WFNN…ASQA. E367 provides a ligand contact to [CaMn4O5] cluster. A helical membrane pass occupies residues 447-471; that stretch reads RARAAAAGFEKGIDRDFEPVLSMTP.

Belongs to the PsbB/PsbC family. PsbC subfamily. PSII is composed of 1 copy each of membrane proteins PsbA, PsbB, PsbC, PsbD, PsbE, PsbF, PsbH, PsbI, PsbJ, PsbK, PsbL, PsbM, PsbT, PsbX, PsbY, PsbZ, Psb30/Ycf12, at least 3 peripheral proteins of the oxygen-evolving complex and a large number of cofactors. It forms dimeric complexes. The cofactor is Binds multiple chlorophylls and provides some of the ligands for the Ca-4Mn-5O cluster of the oxygen-evolving complex. It may also provide a ligand for a Cl- that is required for oxygen evolution. PSII binds additional chlorophylls, carotenoids and specific lipids..

It is found in the plastid. Its subcellular location is the chloroplast thylakoid membrane. In terms of biological role, one of the components of the core complex of photosystem II (PSII). It binds chlorophyll and helps catalyze the primary light-induced photochemical processes of PSII. PSII is a light-driven water:plastoquinone oxidoreductase, using light energy to abstract electrons from H(2)O, generating O(2) and a proton gradient subsequently used for ATP formation. The chain is Photosystem II CP43 reaction center protein from Piper cenocladum (Ant piper).